A 155-amino-acid polypeptide reads, in one-letter code: MTRLTGLRRPLLPIAGAKQAPEQAIDGPQVEVPLTAVDRRRVRRRLHAPDGAELQLAFPTGTVLSPGTVLGTRGGVSYVVSAAPEDVAVVVPRTLAEAAHTAHAVGNLHRDFVEDAGAFLTPWDAPIELLLTRLGVPFTRETRPFHGRPSWEHEG.

The protein belongs to the UreE family.

It is found in the cytoplasm. Involved in urease metallocenter assembly. Binds nickel. Probably functions as a nickel donor during metallocenter assembly. The protein is Urease accessory protein UreE of Deinococcus radiodurans (strain ATCC 13939 / DSM 20539 / JCM 16871 / CCUG 27074 / LMG 4051 / NBRC 15346 / NCIMB 9279 / VKM B-1422 / R1).